Consider the following 445-residue polypeptide: Putative MgpC-like protein MPN_464 (445 aa).

A disordered region spans residues 23-44; the sequence is STTVAVQKSDSSGSQGQGTTDN. The segment covering 31-43 has biased composition (low complexity); that stretch reads SDSSGSQGQGTTD.

The protein belongs to the MgpC family.

This Mycoplasma pneumoniae (strain ATCC 29342 / M129 / Subtype 1) (Mycoplasmoides pneumoniae) protein is Putative MgpC-like protein MPN_464.